We begin with the raw amino-acid sequence, 268 residues long: Indole-3-glycerol phosphate synthase (268 aa).

This sequence belongs to the TrpC family.

It catalyses the reaction 1-(2-carboxyphenylamino)-1-deoxy-D-ribulose 5-phosphate + H(+) = (1S,2R)-1-C-(indol-3-yl)glycerol 3-phosphate + CO2 + H2O. It participates in amino-acid biosynthesis; L-tryptophan biosynthesis; L-tryptophan from chorismate: step 4/5. The polypeptide is Indole-3-glycerol phosphate synthase (Parafrankia sp. (strain EAN1pec)).